Reading from the N-terminus, the 351-residue chain is uncharacterized protein (351 aa).

Residues histidine 23, histidine 25, lysine 151, histidine 184, histidine 212, and aspartate 270 each contribute to the Zn(2+) site. Lysine 151 bears the N6-carboxylysine mark.

It belongs to the metallo-dependent hydrolases superfamily. Phosphotriesterase family. The cofactor is Zn(2+).

This is an uncharacterized protein from Mycoplasma pneumoniae (strain ATCC 29342 / M129 / Subtype 1) (Mycoplasmoides pneumoniae).